The chain runs to 437 residues: Trigger factor (437 aa).

The PPIase FKBP-type domain occupies 164-249 (GDFAKFDFEG…LHEIQCKKIG (86 aa)).

Belongs to the FKBP-type PPIase family. Tig subfamily.

The protein resides in the cytoplasm. It catalyses the reaction [protein]-peptidylproline (omega=180) = [protein]-peptidylproline (omega=0). Involved in protein export. Acts as a chaperone by maintaining the newly synthesized protein in an open conformation. Functions as a peptidyl-prolyl cis-trans isomerase. This chain is Trigger factor, found in Campylobacter hominis (strain ATCC BAA-381 / DSM 21671 / CCUG 45161 / LMG 19568 / NCTC 13146 / CH001A).